The following is a 63-amino-acid chain: Large ribosomal subunit protein bL35 (63 aa).

Basic residues-rich tracts occupy residues 1–25 (MPKMKSKSSAAKRFKKTANGFKHRQ) and 32–47 (LTKKSTKRKRHLRPKK). A disordered region spans residues 1-55 (MPKMKSKSSAAKRFKKTANGFKHRQSFTSHILTKKSTKRKRHLRPKKQVNPSDVP).

It belongs to the bacterial ribosomal protein bL35 family.

The chain is Large ribosomal subunit protein bL35 from Hahella chejuensis (strain KCTC 2396).